The chain runs to 165 residues: uncharacterized protein (165 aa).

The chain crosses the membrane as a helical span at residues 15-35 (MSPAIILIGVLILIVLFVIKF). A coiled-coil region spans residues 67-119 (ISQLNTLRATLAAKKKELKTLRTARKKECTEQLAKTQAEVDRIQAKIDNFSSR). The segment at 123 to 156 (VPLPGGEVGPPYNPPPPRTNTRPNPRPNPRPAQL) is disordered. Residues 133-154 (PYNPPPPRTNTRPNPRPNPRPA) are compositionally biased toward pro residues.

It is found in the membrane. This is an uncharacterized protein from Acheta domesticus (House cricket).